We begin with the raw amino-acid sequence, 162 residues long: UPF0460 protein y4xD (162 aa).

The protein belongs to the UPF0460 family.

The sequence is that of UPF0460 protein y4xD from Sinorhizobium fredii (strain NBRC 101917 / NGR234).